Here is a 486-residue protein sequence, read N- to C-terminus: MRSYKSSITDENELTKQRLRAKSIANLSSNHTTAGQPSTSSQHREALTDLTSQENKNHPRVKLTQTNTNHHRNSSSSSNKIQIYQQIEQKKTDIHQFKKPRLEKVLLNDDDDETDDEFDDEEDKENRYHDLELNEDDSKHQLISEAFETIDDRGISEGENDTAQEARERLEEETQSHTQDMRSIYGVHVPMQPMWNNAIINELKYVIQKYSRNTLDENDEDTYDTTMVAEYSPEIFNYLHELENKFTPDPNYMDFQDDLKWEMRAVLIDWVVQVHARFNLFSETLYLTVNYIDRFLSKRRVSLSRFQLVGAVALFIAAKYEEINCPTVQEIAYMADNAYSIDEFLKAERFMIDVLEFDLGWPGPMSFLRRISKADDYDYETRTLAKYFLEITIMDSKFVASPPSWLAAGAHYISRILLGRGEWTELHVFYSGYTEKQLQPLADVLLENCRHAEINHKAIFEKYKERRYRKSSLFVQEYFRHIMSQS.

Disordered regions lie at residues 1–80 (MRSY…SSNK) and 105–126 (VLLN…DKEN). The span at 25-41 (ANLSSNHTTAGQPSTSS) shows a compositional bias: polar residues. Residues 108-123 (NDDDDETDDEFDDEED) are compositionally biased toward acidic residues. Residues 122–184 (EDKENRYHDL…QSHTQDMRSI (63 aa)) adopt a coiled-coil conformation. One can recognise a Cyclin N-terminal domain in the interval 234 to 359 (EIFNYLHELE…FMIDVLEFDL (126 aa)).

Belongs to the cyclin family. Cyclin AB subfamily. In terms of assembly, interacts with IQG1.

In terms of biological role, 2/mitotic-specific cyclin essential for the control of the cell cycle at the G2/M (mitosis) transition. G2/M cyclins accumulate steadily during G2 and are abruptly destroyed at mitosis. Degradation is necessary for the cell to exit from mitosis. Plays a role in morphogenesis by negatively regulating polarized growth. Through binding to CDC28 regulates cytokinesis, partly by phosphorylation of the actomyosin ring component IQG1. This Candida albicans (strain SC5314 / ATCC MYA-2876) (Yeast) protein is G2/mitotic-specific cyclin-4 (CLB4).